A 140-amino-acid chain; its full sequence is MRRCLRVKTRRGQLGLASSCFEQHSCFSPRVNRILSAVQNTLCTGPSSQAPPQPPQASPPAAADHSRTPSLLASSHSASGGESLFQLYIASLAWPQNCCVLESCRRIPLGGLSSMENRRPLLRKGRLLRGQIHHSQTNEL.

The segment at 43 to 77 is disordered; the sequence is CTGPSSQAPPQPPQASPPAAADHSRTPSLLASSHS. Positions 49 to 58 are enriched in pro residues; that stretch reads QAPPQPPQAS.

Widely expressed.

This is Smith-Magenis syndrome chromosomal region candidate gene 5 protein (SMCR5) from Homo sapiens (Human).